Here is a 355-residue protein sequence, read N- to C-terminus: MLDEEERITMSHELGRLEDLPQDYRDELKQLNLVPLWPSLRAVLPPNVPTRQTQPTYWSYQTLKPLLLKAGELTPIEKAERRVLVLANPGHGLEKMQASAAIYLGMQLLLPGEWAPSHRHTPNAVRMIVEGEGAYTTVDGEKCPMSRGDLILTPTGLWHEHGHDGNEPVVWLDVLDLPLVYYMEASYHIDGERQQVDPGRGDCAWTRAGVVPTPVFQRSDKRYPLLRYPWADTRAALLSLAADQPEQECVQVTYVNPETGDDAENILGFYALMLKPGQTLRLPVRSPAVVFHQIEGRSEARIAESTFALREADTCCAPGYTEVTLKNLSADQPSFIFMADESPLHRKLGVFENRG.

The Cupin type-2 domain maps to 106–174 (MQLLLPGEWA…GNEPVVWLDV (69 aa)).

The protein belongs to the gentisate 1,2-dioxygenase family.

It carries out the reaction 2,5-dihydroxybenzoate + O2 = 3-maleylpyruvate + H(+). The protein operates within aromatic compound metabolism; naphthalene degradation. In terms of biological role, catalyzes the oxygen-dependent ring fission of gentisate between the carboxyl and proximal hydroxyl groups at positions 1 and 2 of the aromatic ring to form maleylpyruvate. Can also catalyze oxidation of alkyl- and halogenated gentisates. Exhibits higher affinity for 3-substituted gentisates than for gentisate but has higher activity with gentisate. The protein is Gentisate 1,2-dioxygenase of Ralstonia sp.